Reading from the N-terminus, the 139-residue chain is Putative nickel-responsive regulator (139 aa).

His76, His87, His89, and Cys95 together coordinate Ni(2+).

Belongs to the transcriptional regulatory CopG/NikR family. Ni(2+) serves as cofactor.

Functionally, transcriptional regulator. This is Putative nickel-responsive regulator from Rhodopseudomonas palustris (strain HaA2).